A 339-amino-acid chain; its full sequence is Dual specificity protein phosphatase 12 (339 aa).

Met1 is modified (N-acetylmethionine). Residues 1–25 (MLEAQGSNHGCERQAPTASPASSAG) are disordered. Residues 26–170 (HAVEVRPGLY…LKLYEAMGYE (145 aa)) enclose the Tyrosine-protein phosphatase domain. Cys114 (phosphocysteine intermediate) is an active-site residue. 115–120 (HAGVSR) serves as a coordination point for substrate. The residue at position 334 (Ser334) is a Phosphoserine.

This sequence belongs to the protein-tyrosine phosphatase family. Non-receptor class dual specificity subfamily. Monomer. Zn(2+) is required as a cofactor.

The protein localises to the nucleus. It is found in the cytoplasm. Its subcellular location is the cytosol. The catalysed reaction is O-phospho-L-tyrosyl-[protein] + H2O = L-tyrosyl-[protein] + phosphate. It catalyses the reaction O-phospho-L-seryl-[protein] + H2O = L-seryl-[protein] + phosphate. The enzyme catalyses O-phospho-L-threonyl-[protein] + H2O = L-threonyl-[protein] + phosphate. Functionally, dual specificity phosphatase; can dephosphorylate both phosphotyrosine and phosphoserine or phosphothreonine residues. Can dephosphorylate glucokinase (in vitro). Has phosphatase activity with the synthetic substrate 6,8-difluoro-4-methylumbelliferyl phosphate and other in vitro substrates. This is Dual specificity protein phosphatase 12 (Dusp12) from Mus musculus (Mouse).